A 374-amino-acid polypeptide reads, in one-letter code: NAD-capped RNA hydrolase ndx-9 (374 aa).

The Zn(2+) site is built by Cys-181, Cys-184, Cys-199, and Cys-202. Substrate is bound by residues Tyr-207, 243-245, Glu-259, Glu-263, and Glu-307; that span reads AGF. One can recognise a Nudix hydrolase domain in the interval 208 to 336; sequence PTFSPVSITL…LADPLLKNLP (129 aa). Residues Ala-243, Glu-259, Glu-263, and Glu-307 each coordinate Mg(2+). The Nudix box motif lies at 244–265; sequence GFAHSGESMAECARREIAEEVG. A Microbody targeting signal motif is present at residues 367 to 369; it reads LEN.

It belongs to the Nudix hydrolase family. NudC subfamily. Homodimer. Mg(2+) is required as a cofactor. It depends on Mn(2+) as a cofactor. The cofactor is Zn(2+).

It catalyses the reaction a 5'-end NAD(+)-phospho-ribonucleoside in mRNA + H2O = a 5'-end phospho-adenosine-phospho-ribonucleoside in mRNA + beta-nicotinamide D-ribonucleotide + 2 H(+). It carries out the reaction NAD(+) + H2O = beta-nicotinamide D-ribonucleotide + AMP + 2 H(+). The catalysed reaction is NADH + H2O = reduced beta-nicotinamide D-ribonucleotide + AMP + 2 H(+). MRNA decapping enzyme that specifically removes the nicotinamide adenine dinucleotide (NAD) cap from a subset of mRNAs by hydrolyzing the diphosphate linkage to produce nicotinamide mononucleotide (NMN) and 5' monophosphate mRNA. The NAD-cap is present at the 5'-end of some RNAs; in contrast to the canonical N7 methylguanosine (m7G) cap, the NAD cap promotes mRNA decay. Mediates the hydrolysis of some nucleoside diphosphate derivatives. This Caenorhabditis elegans protein is NAD-capped RNA hydrolase ndx-9 (ndx-9).